The following is a 298-amino-acid chain: Protoheme IX farnesyltransferase 1 (298 aa).

Helical transmembrane passes span 21–41, 43–63, 94–114, 118–138, 144–164, 168–188, 215–235, 236–256, and 274–294; these read QVWW…INSF, SYLI…SMGA, KGAF…LLIF, LAAL…SYLL, YSII…WYTV, FSWI…VHVW, TAVS…IPYF, LGFF…PIVI, and FIYT…IHII.

Belongs to the UbiA prenyltransferase family. Protoheme IX farnesyltransferase subfamily.

It is found in the cell membrane. It catalyses the reaction heme b + (2E,6E)-farnesyl diphosphate + H2O = Fe(II)-heme o + diphosphate. Its pathway is porphyrin-containing compound metabolism; heme O biosynthesis; heme O from protoheme: step 1/1. Its function is as follows. Converts heme B (protoheme IX) to heme O by substitution of the vinyl group on carbon 2 of heme B porphyrin ring with a hydroxyethyl farnesyl side group. In Picrophilus torridus (strain ATCC 700027 / DSM 9790 / JCM 10055 / NBRC 100828 / KAW 2/3), this protein is Protoheme IX farnesyltransferase 1.